Consider the following 299-residue polypeptide: AUGMIN subunit 1 (299 aa).

Residue Ser2 is modified to N-acetylserine. Coiled-coil stretches lie at residues Arg76–Ala96 and Arg164–Val184.

Belongs to the HAUS1 family. Part of the augmin complex composed of 8 subunits. The complex acts on microtubules and interacts with gamma-tubulin in spindles and the phragmoplast. Interacts with AUG3.

Its subcellular location is the cytoplasm. The protein localises to the cytoskeleton. It is found in the spindle. It localises to the phragmoplast. Functionally, involved in microtubules reorganization during spindle and phragmoplast development. The polypeptide is AUGMIN subunit 1 (Arabidopsis thaliana (Mouse-ear cress)).